A 228-amino-acid polypeptide reads, in one-letter code: Small ribosomal subunit protein uS3 (228 aa).

Residues 39–107 (VREYLQDKLK…PVHINIEEIR (69 aa)) form the KH type-2 domain.

It belongs to the universal ribosomal protein uS3 family. In terms of assembly, part of the 30S ribosomal subunit. Forms a tight complex with proteins S10 and S14.

Binds the lower part of the 30S subunit head. Binds mRNA in the 70S ribosome, positioning it for translation. The protein is Small ribosomal subunit protein uS3 of Pseudomonas syringae pv. syringae (strain B728a).